Here is a 3750-residue protein sequence, read N- to C-terminus: Cubilin homolog (3750 aa).

Residues 1–28 (MEGAARSRLLLCWTLLAIITDTWPIAEG) form the signal peptide. N-linked (GlcNAc...) asparagine glycosylation is found at asparagine 51 and asparagine 123. Positions 154–190 (EANSCASGPCENGGTCYNTYTGFRCQCRSAFEGTKCE) constitute an EGF-like 1 domain. 6 disulfides stabilise this stretch: cysteine 158–cysteine 169, cysteine 163–cysteine 178, cysteine 180–cysteine 189, cysteine 196–cysteine 212, cysteine 206–cysteine 221, and cysteine 223–cysteine 232. Residues 192-233 (DVNECALYEGTDLGCQNGGQCQNHFGTYSCLCQPGWHGMHCT) enclose the EGF-like 2; calcium-binding domain. In terms of domain architecture, EGF-like 3; calcium-binding spans 282-308 (DVDECSDSAAHKPCSTSCINLPGSFTC). One can recognise an EGF-like 4; calcium-binding domain in the interval 324 to 352 (DLDECQTNNGGCSLSPKVDCINTYGSYHC). Asparagine 424 carries N-linked (GlcNAc...) asparagine glycosylation. 2 consecutive EGF-like domains span residues 426–463 (TTTN…PICE) and 465–503 (QPSP…RLCE). 7 cysteine pairs are disulfide-bonded: cysteine 430–cysteine 441, cysteine 435–cysteine 451, cysteine 453–cysteine 462, cysteine 469–cysteine 480, cysteine 474–cysteine 491, cysteine 493–cysteine 502, and cysteine 509–cysteine 535. Asparagine 448 carries N-linked (GlcNAc...) asparagine glycosylation. CUB domains follow at residues 509 to 623 (CNGM…WNSM), 627 to 738 (CGGR…YSVE), 744 to 852 (CGGV…YRMA), 853 to 971 (CDYK…YRAL), 978 to 1095 (CGGV…YTFE), 1100 to 1212 (CGGH…WRIF), 1216 to 1331 (CGGS…YKAN), 1332 to 1434 (CIRN…QLDY), 1439 to 1550 (CMEE…YRTV), 1554 to 1670 (CGGK…FHES), 1671 to 1788 (CGQT…YMTM), 1792 to 1902 (CGSI…YNYE), and 1903 to 2001 (HHNE…WNRL). N-linked (GlcNAc...) asparagine glycosylation is found at asparagine 542 and asparagine 548. Cysteine 562 and cysteine 584 form a disulfide bridge. Asparagine 609 carries N-linked (GlcNAc...) asparagine glycosylation. 6 disulfide bridges follow: cysteine 627–cysteine 654, cysteine 681–cysteine 701, cysteine 744–cysteine 770, cysteine 853–cysteine 879, cysteine 913–cysteine 933, and cysteine 978–cysteine 1004. A glycan (N-linked (GlcNAc...) asparagine) is linked at asparagine 871. Ca(2+) contacts are provided by glutamate 1026, aspartate 1034, and aspartate 1080. A disulfide bond links cysteine 1031 and cysteine 1058. Cysteines 1100 and 1126 form a disulfide. N-linked (GlcNAc...) asparagine glycosylation is present at asparagine 1119. Residue glutamate 1148 coordinates Ca(2+). Asparagine 1152 carries N-linked (GlcNAc...) asparagine glycosylation. A disulfide bond links cysteine 1153 and cysteine 1175. The Ca(2+) site is built by aspartate 1156 and aspartate 1197. Cysteines 1216 and 1242 form a disulfide. Glutamate 1264, aspartate 1272, and aspartate 1316 together coordinate Ca(2+). A disulfide bridge connects residues cysteine 1269 and cysteine 1292. Residues cysteine 1332 and cysteine 1360 are joined by a disulfide bond. N-linked (GlcNAc...) asparagine glycosylation is found at asparagine 1335, asparagine 1359, asparagine 1413, and asparagine 1424. A disulfide bridge links cysteine 1439 with cysteine 1465. The N-linked (GlcNAc...) asparagine glycan is linked to asparagine 1491. Disulfide bonds link cysteine 1492-cysteine 1513, cysteine 1554-cysteine 1580, cysteine 1607-cysteine 1631, cysteine 1671-cysteine 1697, cysteine 1733-cysteine 1755, cysteine 1792-cysteine 1818, and cysteine 1845-cysteine 1866. A glycan (N-linked (GlcNAc...) asparagine) is linked at asparagine 1694. N-linked (GlcNAc...) asparagine glycosylation is found at asparagine 1908 and asparagine 2009. Cystine bridges form between cysteine 2019/cysteine 2048 and cysteine 2077/cysteine 2100. CUB domains follow at residues 2019–2139 (CGNQ…VRTA), 2140–2256 (CGSE…FRFE), 2262–2383 (DSGR…LSVA), 2385–2512 (CGGS…YTSL), and 2516–2646 (CGET…MNEV). Residues asparagine 2092, asparagine 2128, asparagine 2152, and asparagine 2231 are each glycosylated (N-linked (GlcNAc...) asparagine). A disulfide bond links cysteine 2140 and cysteine 2167. A disulfide bridge connects residues cysteine 2324 and cysteine 2346. Asparagine 2377 carries N-linked (GlcNAc...) asparagine glycosylation. Residues cysteine 2385 and cysteine 2416 are joined by a disulfide bond. Asparagine 2442 carries an N-linked (GlcNAc...) asparagine glycan. 2 cysteine pairs are disulfide-bonded: cysteine 2445–cysteine 2474 and cysteine 2516–cysteine 2542. Asparagine 2655, asparagine 2671, asparagine 2682, and asparagine 2772 each carry an N-linked (GlcNAc...) asparagine glycan. Disulfide bonds link cysteine 2761–cysteine 2790 and cysteine 2837–cysteine 2859. CUB domains follow at residues 2761–2895 (CGGV…IKYG), 2898–3010 (CGGK…FERN), 3011–3128 (CGGL…YTSR), 3130–3246 (CGGI…VRVM), 3249–3364 (CDEK…INAI), 3368–3512 (CGSS…VALN), 3522–3615 (LQGR…YLAS), and 3623–3736 (CGGQ…FAGV). 2 N-linked (GlcNAc...) asparagine glycosylation sites follow: asparagine 2885 and asparagine 2889. Disulfide bonds link cysteine 2898–cysteine 2921 and cysteine 2949–cysteine 2973. N-linked (GlcNAc...) asparagine glycans are attached at residues asparagine 2960, asparagine 2965, and asparagine 2982. Residues cysteine 3011 and cysteine 3039 are joined by a disulfide bond. 2 N-linked (GlcNAc...) asparagine glycosylation sites follow: asparagine 3040 and asparagine 3074. Disulfide bonds link cysteine 3070/cysteine 3092 and cysteine 3130/cysteine 3157. Asparagine 3160 carries N-linked (GlcNAc...) asparagine glycosylation. 4 disulfide bridges follow: cysteine 3184–cysteine 3207, cysteine 3249–cysteine 3278, cysteine 3305–cysteine 3327, and cysteine 3368–cysteine 3402. Residue asparagine 3256 is glycosylated (N-linked (GlcNAc...) asparagine). N-linked (GlcNAc...) asparagine glycosylation is present at asparagine 3427. An intrachain disulfide couples cysteine 3430 to cysteine 3475. N-linked (GlcNAc...) asparagine glycosylation is found at asparagine 3543, asparagine 3572, and asparagine 3645. 3 disulfides stabilise this stretch: cysteine 3560–cysteine 3579, cysteine 3623–cysteine 3649, and cysteine 3676–cysteine 3699.

As to expression, specifically expressed in nephrocytes.

The protein localises to the cell membrane. Required in the nephrocyte for normal uptake of proteins and elimination of toxins, and for maintenance of endocytic trafficking structures. May function together with Amnionless. In Drosophila melanogaster (Fruit fly), this protein is Cubilin homolog.